The primary structure comprises 491 residues: Protein nucleotidyltransferase YdiU (491 aa).

ATP contacts are provided by glycine 94, glycine 96, arginine 97, lysine 117, aspartate 129, glycine 130, arginine 180, and arginine 187. Aspartate 256 functions as the Proton acceptor in the catalytic mechanism. Asparagine 257 and aspartate 266 together coordinate Mg(2+). Aspartate 266 is an ATP binding site.

Belongs to the SELO family. The cofactor is Mg(2+). Mn(2+) serves as cofactor.

It carries out the reaction L-seryl-[protein] + ATP = 3-O-(5'-adenylyl)-L-seryl-[protein] + diphosphate. The enzyme catalyses L-threonyl-[protein] + ATP = 3-O-(5'-adenylyl)-L-threonyl-[protein] + diphosphate. The catalysed reaction is L-tyrosyl-[protein] + ATP = O-(5'-adenylyl)-L-tyrosyl-[protein] + diphosphate. It catalyses the reaction L-histidyl-[protein] + UTP = N(tele)-(5'-uridylyl)-L-histidyl-[protein] + diphosphate. It carries out the reaction L-seryl-[protein] + UTP = O-(5'-uridylyl)-L-seryl-[protein] + diphosphate. The enzyme catalyses L-tyrosyl-[protein] + UTP = O-(5'-uridylyl)-L-tyrosyl-[protein] + diphosphate. Nucleotidyltransferase involved in the post-translational modification of proteins. It can catalyze the addition of adenosine monophosphate (AMP) or uridine monophosphate (UMP) to a protein, resulting in modifications known as AMPylation and UMPylation. This is Protein nucleotidyltransferase YdiU from Clostridium botulinum (strain ATCC 19397 / Type A).